The sequence spans 284 residues: Protease HtpX (284 aa).

2 consecutive transmembrane segments (helical) span residues 4–24 (ILLFLATNAAVLIVFNIILSL) and 33–53 (MGLLIMAALFGFTGSIISLLM). H139 lines the Zn(2+) pocket. E140 is a catalytic residue. H143 contributes to the Zn(2+) binding site. The next 2 helical transmembrane spans lie at 147-167 (GDMVTMTLLQGVLNTFVIFAA) and 187-207 (IYFLVAMVLEVVFGFLASMIA). E215 lines the Zn(2+) pocket.

It belongs to the peptidase M48B family. It depends on Zn(2+) as a cofactor.

It is found in the cell inner membrane. This is Protease HtpX from Mannheimia succiniciproducens (strain KCTC 0769BP / MBEL55E).